A 318-amino-acid chain; its full sequence is Probable ABC transporter permease protein MG189 (318 aa).

The next 6 membrane-spanning stretches (helical) occupy residues 42–62, 98–118, 134–154, 169–189, 230–250, and 282–302; these read VLGF…VVSF, AIVV…FFTI, LVWF…LIGQ, PLIV…GFMY, VGIL…LLLG, and LKMS…FLFH. The region spanning 99 to 301 is the ABC transmembrane type-1 domain; sequence IVVNTLVTVL…LPMFIIYFLF (203 aa).

It belongs to the binding-protein-dependent transport system permease family. MalFG subfamily.

The protein resides in the cell membrane. Its function is as follows. Probably part of a binding-protein-dependent transport system. Probably responsible for the translocation of the substrate across the membrane. This is Probable ABC transporter permease protein MG189 from Mycoplasma genitalium (strain ATCC 33530 / DSM 19775 / NCTC 10195 / G37) (Mycoplasmoides genitalium).